The sequence spans 643 residues: 1-deoxy-D-xylulose-5-phosphate synthase (643 aa).

Thiamine diphosphate-binding positions include histidine 78 and alanine 119–serine 121. A Mg(2+)-binding site is contributed by aspartate 150. Residues glycine 151–alanine 152, asparagine 179, tyrosine 288, and glutamate 370 contribute to the thiamine diphosphate site. Asparagine 179 is a binding site for Mg(2+).

The protein belongs to the transketolase family. DXPS subfamily. As to quaternary structure, homodimer. Requires Mg(2+) as cofactor. Thiamine diphosphate is required as a cofactor.

It carries out the reaction D-glyceraldehyde 3-phosphate + pyruvate + H(+) = 1-deoxy-D-xylulose 5-phosphate + CO2. It functions in the pathway metabolic intermediate biosynthesis; 1-deoxy-D-xylulose 5-phosphate biosynthesis; 1-deoxy-D-xylulose 5-phosphate from D-glyceraldehyde 3-phosphate and pyruvate: step 1/1. Catalyzes the acyloin condensation reaction between C atoms 2 and 3 of pyruvate and glyceraldehyde 3-phosphate to yield 1-deoxy-D-xylulose-5-phosphate (DXP). This Xanthobacter autotrophicus (strain ATCC BAA-1158 / Py2) protein is 1-deoxy-D-xylulose-5-phosphate synthase.